Here is a 683-residue protein sequence, read N- to C-terminus: Cytochrome P450 monooxygenase htyF (683 aa).

A helical transmembrane segment spans residues 8–28 (PALLAASVVLAVSLVSYVIQL). A glycan (N-linked (GlcNAc...) asparagine) is linked at N29. Residue C481 participates in heme binding. N581 is a glycosylation site (N-linked (GlcNAc...) asparagine). The helical transmembrane segment at 588–608 (LYVFVVLVACVAALFIGIGIY) threads the bilayer.

It belongs to the cytochrome P450 family. Heme is required as a cofactor.

It is found in the membrane. It participates in antifungal biosynthesis. In terms of biological role, cytochrome P450 monooxygenase; part of the gene cluster that mediates the de novo generation of L-homotyrosine from acetyl-CoA and 4-hydroxyphenyl-pyruvate. L-homotyrosine is a building block of echinocandin B, a fungal lipidated cyclic hexapeptide that acts as an antifungal agent. L-homotyrosine 4-hydroxyphenyl-pyruvate first undergoes an aldol-type condensation by htyA with the C-2 of acetyl-CoA followed by the release of CoA to form 2-(4-hydroxybenzyl)-malate. This is followed by isomerization of 2-(4-hydroxy-benzyl)-malate to 3-(4-hydroxybenzyl)-malate by htyD. Thereafter, 3-(4-hydroxybenzyl)-malate undergoes decarboxylation and oxidation to form 2-oxo-4-(4-hydroxybenzyl)butanoic acid, coupled to reduction of NAD(+) to NADH by htyC. The product then undergoes transamination catalyzed by htyB to form L-homotyrosine. This Aspergillus rugulosus (Emericella rugulosa) protein is Cytochrome P450 monooxygenase htyF.